The chain runs to 339 residues: MAVFTELFWITLKIMALVVPLMLAVAYLTYAERRVIGAMQDRRGPNRVGYQGLLQPIADALKLVMKEISIPSNANRVLFVIAPLLAIMPALAAWAVIPVAEGWAIADINAGLLYILAMTSLGVYGIIIAGWASNSKYALLGTLRASAQVVSYEIAMGFALVGVLMAAGSMNLGQIIQAQAGGIFHWFWLPLLPLFLVYWISGVAETNRAPFDVAEGESEIVAGFHVEYSGTSFAVFFLAEYANMILISAVAAVMFLGGWYSPFHGWPILGPMLDWVPGVVWFMLKTAFFMFCYLWFRATFPRYRYDQIMRLGWKVLIPVTVVWLIVLTIFIVTGFGPWF.

8 helical membrane passes run 7–27 (LFWI…AVAY), 77–97 (VLFV…WAVI), 112–132 (LLYI…AGWA), 149–169 (VVSY…AAGS), 180–200 (AGGI…VYWI), 235–255 (VFFL…AVMF), 276–296 (VPGV…YLWF), and 315–335 (VLIP…VTGF).

This sequence belongs to the complex I subunit 1 family. As to quaternary structure, NDH-1 is composed of 14 different subunits. Subunits NuoA, H, J, K, L, M, N constitute the membrane sector of the complex.

The protein resides in the cell inner membrane. It carries out the reaction a quinone + NADH + 5 H(+)(in) = a quinol + NAD(+) + 4 H(+)(out). In terms of biological role, NDH-1 shuttles electrons from NADH, via FMN and iron-sulfur (Fe-S) centers, to quinones in the respiratory chain. The immediate electron acceptor for the enzyme in this species is believed to be ubiquinone. Couples the redox reaction to proton translocation (for every two electrons transferred, four hydrogen ions are translocated across the cytoplasmic membrane), and thus conserves the redox energy in a proton gradient. This subunit may bind ubiquinone. This is NADH-quinone oxidoreductase subunit H from Alkalilimnicola ehrlichii (strain ATCC BAA-1101 / DSM 17681 / MLHE-1).